The following is a 911-amino-acid chain: General transcription factor 3C polypeptide 2 (911 aa).

2 disordered regions span residues 24–187 (DSPG…RRRA) and 205–297 (ALPA…MAPN). Residues 35-46 (DVKTSSEMTSAE) are compositionally biased toward polar residues. At Ser-63 the chain carries Phosphoserine. Positions 64–81 (PDQRRLPPEQESLSRLEQ) are enriched in basic and acidic residues. Residues 92–112 (SKPRASKPGRKRGGRTRKGPK) show a composition bias toward basic residues. A compositionally biased stretch (pro residues) spans 114–123 (PQQPNPPSAP). A phosphoserine mark is found at Ser-132, Ser-165, Ser-167, Ser-220, and Ser-260. Residues 253–262 (EAEDVEESEG) show a composition bias toward acidic residues. Low complexity predominate over residues 263–277 (PSESSSEPEPVVPRS). WD repeat units lie at residues 366-426 (PEDG…MNET), 427-483 (HPLS…AWEL), 484-535 (PGTP…IYKV), 536-603 (QCVA…SLKL), 604-654 (YPFQ…NSIK), and 655-690 (RFLS…HYID). The residue at position 597 (Ser-597) is a Phosphoserine. Residues 765-785 (SPEGPDHSSASSGVPNPPKAR) are disordered. Residues Ser-871, Ser-892, and Ser-893 each carry the phosphoserine modification. The disordered stretch occupies residues 889–911 (FQPSSPTRRPGFSPTSHRLLPTP). Residue Thr-895 is modified to Phosphothreonine. A Phosphoserine modification is found at Ser-901.

In terms of assembly, part of the TFIIIC subcomplex TFIIIC2, consisting of six subunits, GTF3C1, GTF3C2, GTF3C3, GTF3C4, GTF3C5 and GTF3C6.

The protein resides in the nucleus. Required for RNA polymerase III-mediated transcription. Component of TFIIIC that initiates transcription complex assembly on tRNA and is required for transcription of 5S rRNA and other stable nuclear and cytoplasmic RNAs. May play a direct role in stabilizing interactions of TFIIIC2 with TFIIIC1. The sequence is that of General transcription factor 3C polypeptide 2 (GTF3C2) from Homo sapiens (Human).